The following is a 229-amino-acid chain: Ribonuclease 3 (229 aa).

The RNase III domain maps to 5-134; sequence EQKLEQDFGI…FLGALYLDQG (130 aa). Glu47 provides a ligand contact to Mg(2+). The active site involves Asp51. Mg(2+)-binding residues include Asp120 and Glu123. Glu123 is a catalytic residue. One can recognise a DRBM domain in the interval 160 to 229; the sequence is DYKTALQERL…AKSALEQLGN (70 aa).

Belongs to the ribonuclease III family. As to quaternary structure, homodimer. It depends on Mg(2+) as a cofactor.

It is found in the cytoplasm. The catalysed reaction is Endonucleolytic cleavage to 5'-phosphomonoester.. Digests double-stranded RNA. Involved in the processing of primary rRNA transcript to yield the immediate precursors to the large and small rRNAs (23S and 16S). Also processes some mRNAs, and tRNAs when they are encoded in the rRNA operon. In terms of biological role, CRISPR (clustered regularly interspaced short palindromic repeat) is an adaptive immune system that provides protection against mobile genetic elements (viruses, transposable elements and conjugative plasmids). CRISPR clusters contain spacers, sequences complementary to antecedent mobile elements, and target invading nucleic acids. CRISPR clusters are transcribed and processed into CRISPR RNA (crRNA). In this organism endogenous ribonuclease 3 and Cas9 are required for correct coprocessing of pre-crRNA and the trans-encoded small RNA (tracrRNA). Cas9, crRNA and tracrRNA are required for cleavage of invading DNA. Complements pre-crRNA and tracRNA coprocessing defects in an rnc deletion in S.pyogenes strain 370. The protein is Ribonuclease 3 of Streptococcus thermophilus (strain ATCC BAA-491 / LMD-9).